We begin with the raw amino-acid sequence, 213 residues long: Motile sperm domain-containing protein 1 (213 aa).

The 128-residue stretch at P16–F143 folds into the MSP domain. Helical transmembrane passes span S159–G179 and L191–L211. The Nuclear export signal motif lies at L205–M208.

Its subcellular location is the endoplasmic reticulum membrane. It is found in the golgi apparatus membrane. Plays a role in differentiation and/or proliferation of mesenchymal stem cells. Proposed to be involved in epithelial-to-mesenchymal transition (EMT). However, another study suggests that it is not required for EMT or stem cell self-renewal and acts during later stages of differentiation. The sequence is that of Motile sperm domain-containing protein 1 (MOSPD1) from Pongo abelii (Sumatran orangutan).